The chain runs to 505 residues: Glycerol kinase 1 (505 aa).

Thr13 contributes to the ADP binding site. 3 residues coordinate ATP: Thr13, Thr14, and Ser15. Residue Thr13 coordinates sn-glycerol 3-phosphate. Position 17 (Arg17) interacts with ADP. Positions 83, 84, and 135 each coordinate sn-glycerol 3-phosphate. Arg83, Glu84, and Tyr135 together coordinate glycerol. The residue at position 231 (His231) is a Phosphohistidine; by HPr. Sn-glycerol 3-phosphate is bound at residue Asp245. Positions 245 and 246 each coordinate glycerol. ADP is bound by residues Thr267 and Gly310. ATP contacts are provided by Thr267, Gly310, Gln314, and Gly411. Residues Gly411 and Asn415 each contribute to the ADP site.

It belongs to the FGGY kinase family. In terms of assembly, homotetramer and homodimer (in equilibrium). Post-translationally, the phosphoenolpyruvate-dependent sugar phosphotransferase system (PTS), including enzyme I, and histidine-containing protein (HPr) are required for the phosphorylation, which leads to the activation of the enzyme.

It carries out the reaction glycerol + ATP = sn-glycerol 3-phosphate + ADP + H(+). It functions in the pathway polyol metabolism; glycerol degradation via glycerol kinase pathway; sn-glycerol 3-phosphate from glycerol: step 1/1. With respect to regulation, activated by phosphorylation and inhibited by fructose 1,6-bisphosphate (FBP). Functionally, key enzyme in the regulation of glycerol uptake and metabolism. Catalyzes the phosphorylation of glycerol to yield sn-glycerol 3-phosphate. The protein is Glycerol kinase 1 of Lactiplantibacillus plantarum (strain ATCC BAA-793 / NCIMB 8826 / WCFS1) (Lactobacillus plantarum).